A 399-amino-acid polypeptide reads, in one-letter code: Succinate--CoA ligase [ADP-forming] subunit beta (399 aa).

The 246-residue stretch at 9-254 (KAVLQPFGVS…ETEEDAKEIE (246 aa)) folds into the ATP-grasp domain. ATP is bound by residues Lys-46, 53–55 (GRG), Glu-109, Ser-112, and Glu-117. Residues Asn-209 and Asp-223 each contribute to the Mg(2+) site. Substrate is bound by residues Asn-274 and 331–333 (GIM).

It belongs to the succinate/malate CoA ligase beta subunit family. Heterotetramer of two alpha and two beta subunits. Mg(2+) is required as a cofactor.

The catalysed reaction is succinate + ATP + CoA = succinyl-CoA + ADP + phosphate. It catalyses the reaction GTP + succinate + CoA = succinyl-CoA + GDP + phosphate. It functions in the pathway carbohydrate metabolism; tricarboxylic acid cycle; succinate from succinyl-CoA (ligase route): step 1/1. Succinyl-CoA synthetase functions in the citric acid cycle (TCA), coupling the hydrolysis of succinyl-CoA to the synthesis of either ATP or GTP and thus represents the only step of substrate-level phosphorylation in the TCA. The beta subunit provides nucleotide specificity of the enzyme and binds the substrate succinate, while the binding sites for coenzyme A and phosphate are found in the alpha subunit. In Rhodopseudomonas palustris (strain BisB18), this protein is Succinate--CoA ligase [ADP-forming] subunit beta.